The sequence spans 161 residues: Ribosome maturation factor RimP (161 aa).

This sequence belongs to the RimP family.

Its subcellular location is the cytoplasm. Required for maturation of 30S ribosomal subunits. The protein is Ribosome maturation factor RimP of Rickettsia typhi (strain ATCC VR-144 / Wilmington).